The chain runs to 214 residues: Large ribosomal subunit protein uL16-like (214 aa).

The protein belongs to the universal ribosomal protein uL16 family. Component of a male germ cell-specific 60S large ribosomal subunit (LSU), which contains RPL10L and RPL39L, instead of RPL10 and RPL39 paralogs. The composition of the rest of the complex is similar to classical ribosomes. In terms of tissue distribution, testis-specific.

It localises to the cytoplasm. Testis-specific component of the ribosome, which is required for the transition from prophase to metaphase in male meiosis I. Compensates for the inactivated X-linked RPL10 paralog during spermatogenesis. The ribosome is a large ribonucleoprotein complex responsible for the synthesis of proteins in the cell. The male germ cell-specific ribosome displays a ribosomal polypeptide exit tunnel of distinct size and charge states compared with the classical ribosome. It is responsible for regulating the biosynthesis and folding of a subset of male germ-cell-specific proteins that are essential for the formation of sperm. This is Large ribosomal subunit protein uL16-like from Mus musculus (Mouse).